The primary structure comprises 42 residues: Photosystem I reaction center subunit IX (42 aa).

The helical transmembrane segment at 7-27 (YLSTAPVLATLWFGFLAGLLI) threads the bilayer.

Belongs to the PsaJ family.

The protein localises to the plastid. Its subcellular location is the chloroplast thylakoid membrane. Its function is as follows. May help in the organization of the PsaE and PsaF subunits. The chain is Photosystem I reaction center subunit IX from Huperzia lucidula (Shining clubmoss).